Here is a 119-residue protein sequence, read N- to C-terminus: C-X-C motif chemokine 17 (119 aa).

Residues 1–21 (MKVLISSLLLLLPLMLMSMVS) form the signal peptide. 2 disulfides stabilise this stretch: Cys75–Cys103 and Cys77–Cys110. The disordered stretch occupies residues 81–100 (KGNVKKTRHQRHHRKPNKHS). Over residues 82–100 (GNVKKTRHQRHHRKPNKHS) the composition is skewed to basic residues.

It belongs to the intercrine alpha (chemokine CxC) family. Likely to undergo an endoproteolytic process to form a four-cysteine-containing mature peptide with a canonical CXC chemokine scaffold after secretion. In terms of tissue distribution, detected in trachea, stomach, lung and skeletal muscle. Detected in intestine and in normal and asthmatic lung (at protein level). Breast tumors showed 3- to 24-fold up-regulation.

It localises to the secreted. Functionally, chemokine that acts as a chemoattractant for monocytes, macrophages and dendritic cells. Plays a role in angiogenesis and possibly in the development of tumors. Acts as an anti-inflammatory in the stomach. May play a role in the innate defense against infections. Activates the C-X-C chemokine receptor GPR35 to induce a rapid and transient rise in the level of intracellular calcium ions. In terms of biological role, seems to exhibit much higher chemoattractant potency on monocytes and macrophages than 6-Cys CXCL17. The protein is C-X-C motif chemokine 17 (CXCL17) of Homo sapiens (Human).